Here is a 304-residue protein sequence, read N- to C-terminus: GTPase Era (304 aa).

Residues 11-186 (YCGFIAIVGR…LRKGVHHFPE (176 aa)) form the Era-type G domain. Residues 19 to 26 (GRPNVGKS) form a G1 region. Position 19–26 (19–26 (GRPNVGKS)) interacts with GTP. The segment at 45–49 (QTTRH) is G2. A G3 region spans residues 66–69 (DTPG). Residues 66–70 (DTPGL) and 128–131 (NKVD) each bind GTP. The interval 128 to 131 (NKVD) is G4. The segment at 158-160 (ISA) is G5. One can recognise a KH type-2 domain in the interval 210 to 287 (TGEELPYSVT…HLELWVKVKS (78 aa)).

The protein belongs to the TRAFAC class TrmE-Era-EngA-EngB-Septin-like GTPase superfamily. Era GTPase family. In terms of assembly, monomer.

It localises to the cytoplasm. The protein resides in the cell inner membrane. In terms of biological role, an essential GTPase that binds both GDP and GTP, with rapid nucleotide exchange. Plays a role in 16S rRNA processing and 30S ribosomal subunit biogenesis and possibly also in cell cycle regulation and energy metabolism. This Histophilus somni (strain 2336) (Haemophilus somnus) protein is GTPase Era.